The chain runs to 62 residues: MLFIFQLTLLAFIGLSLALVIGVPVLLASPEGWAQSKGLVFSGSALWMLLVFVVGALNSFVS.

The next 2 membrane-spanning stretches (helical) occupy residues 8–28 (TLLA…VLLA) and 41–61 (FSGS…NSFV).

It belongs to the PsbZ family. As to quaternary structure, PSII is composed of 1 copy each of membrane proteins PsbA, PsbB, PsbC, PsbD, PsbE, PsbF, PsbH, PsbI, PsbJ, PsbK, PsbL, PsbM, PsbT, PsbY, PsbZ, Psb30/Ycf12, at least 3 peripheral proteins of the oxygen-evolving complex and a large number of cofactors. It forms dimeric complexes.

Its subcellular location is the plastid. The protein localises to the chloroplast thylakoid membrane. Its function is as follows. May control the interaction of photosystem II (PSII) cores with the light-harvesting antenna, regulates electron flow through the 2 photosystem reaction centers. PSII is a light-driven water plastoquinone oxidoreductase, using light energy to abstract electrons from H(2)O, generating a proton gradient subsequently used for ATP formation. This Ostreococcus tauri protein is Photosystem II reaction center protein Z.